Consider the following 279-residue polypeptide: Pantothenate synthetase (279 aa).

Met31 to His38 contacts ATP. Residue His38 is the Proton donor of the active site. (R)-pantoate is bound at residue Gln62. Residue Gln62 coordinates beta-alanine. Gly148–Asp151 contributes to the ATP binding site. Position 154 (Gln154) interacts with (R)-pantoate. Residues Val177 and Leu185–Arg188 each bind ATP.

It belongs to the pantothenate synthetase family. In terms of assembly, homodimer.

The protein localises to the cytoplasm. The catalysed reaction is (R)-pantoate + beta-alanine + ATP = (R)-pantothenate + AMP + diphosphate + H(+). Its pathway is cofactor biosynthesis; (R)-pantothenate biosynthesis; (R)-pantothenate from (R)-pantoate and beta-alanine: step 1/1. Functionally, catalyzes the condensation of pantoate with beta-alanine in an ATP-dependent reaction via a pantoyl-adenylate intermediate. This chain is Pantothenate synthetase, found in Cereibacter sphaeroides (strain ATCC 17023 / DSM 158 / JCM 6121 / CCUG 31486 / LMG 2827 / NBRC 12203 / NCIMB 8253 / ATH 2.4.1.) (Rhodobacter sphaeroides).